We begin with the raw amino-acid sequence, 48 residues long: Protein YgdT (48 aa).

In Escherichia coli (strain K12), this protein is Protein YgdT (ygdT).